A 111-amino-acid polypeptide reads, in one-letter code: Putative single-stranded DNA-binding protein ycf41 (111 aa).

The SSB domain maps to 1–98; that stretch reads MNSCTLLVQI…FSTSRIFKYK (98 aa).

It localises to the plastid. Its subcellular location is the chloroplast. The chain is Putative single-stranded DNA-binding protein ycf41 (ycf41) from Pyropia yezoensis (Susabi-nori).